Here is a 370-residue protein sequence, read N- to C-terminus: Integrin-linked kinase-associated serine/threonine phosphatase 2C (370 aa).

Met-1 carries the post-translational modification N-acetylmethionine. Residues 1-69 (MDLFGDLPEP…SDEEKNGSEE (69 aa)) form a disordered region. Position 13 is a phosphoserine (Ser-13). Over residues 33–45 (SSGDSGSLDTSLS) the composition is skewed to low complexity. The segment covering 46-69 (EEVKNEGKGAKRKASDEEKNGSEE) has biased composition (basic and acidic residues). The region spanning 86–368 (KGYVAERKGE…DNVTVMVVRI (283 aa)) is the PPM-type phosphatase domain. Residues Asp-130 and Gly-131 each coordinate Mn(2+). Lys-188 is subject to N6-acetyllysine. Residues Asp-304 and Asp-359 each contribute to the Mn(2+) site.

The protein belongs to the PP2C family. As to quaternary structure, interacts with ILK. The cofactor is Mg(2+). It depends on Mn(2+) as a cofactor.

The protein resides in the cytoplasm. It catalyses the reaction O-phospho-L-seryl-[protein] + H2O = L-seryl-[protein] + phosphate. The catalysed reaction is O-phospho-L-threonyl-[protein] + H2O = L-threonyl-[protein] + phosphate. Functionally, protein phosphatase that may play a role in regulation of cell cycle progression via dephosphorylation of its substrates whose appropriate phosphorylation states might be crucial for cell proliferation. Selectively associates with integrin linked kinase (ILK), to modulate cell adhesion and growth factor signaling. Inhibits the ILK-GSK3B signaling axis and may play an important role in inhibiting oncogenic transformation. In Bos taurus (Bovine), this protein is Integrin-linked kinase-associated serine/threonine phosphatase 2C (ILKAP).